The chain runs to 153 residues: Large ribosomal subunit protein uL30 (153 aa).

Belongs to the universal ribosomal protein uL30 family. Part of the 50S ribosomal subunit.

This is Large ribosomal subunit protein uL30 from Methanosarcina acetivorans (strain ATCC 35395 / DSM 2834 / JCM 12185 / C2A).